The chain runs to 115 residues: Holo-[acyl-carrier-protein] synthase (115 aa).

The Mg(2+) site is built by Asp5 and Glu50.

Belongs to the P-Pant transferase superfamily. AcpS family. Mg(2+) serves as cofactor.

Its subcellular location is the cytoplasm. The catalysed reaction is apo-[ACP] + CoA = holo-[ACP] + adenosine 3',5'-bisphosphate + H(+). Functionally, transfers the 4'-phosphopantetheine moiety from coenzyme A to a Ser of acyl-carrier-protein. This is Holo-[acyl-carrier-protein] synthase from Campylobacter fetus subsp. fetus (strain 82-40).